The following is a 119-amino-acid chain: MEKGKGRKEEVVTREYTINLHRRLHSCTFKKKAPNAIKEIRKFALKAMGTKDVRVDVKLNKQIWSKGIRGPPRRIRVRVARKRNDDEDAKEEFFSLVTVAEIPAEGLSGLGTKVIEEEE.

It belongs to the eukaryotic ribosomal protein eL31 family.

The protein is Large ribosomal subunit protein eL31z (RPL31A) of Arabidopsis thaliana (Mouse-ear cress).